The following is a 174-amino-acid chain: B3 domain-containing protein At3g06220 (174 aa).

Residues 8–101 constitute a DNA-binding region (TF-B3); that stretch reads PRFYTVFLSC…SYEVSIYGRG (94 aa). Residues 114 to 174 are disordered; it reads EISDESESDN…ISDASDSDYY (61 aa). 2 stretches are compositionally biased toward acidic residues: residues 139–150 and 164–174; these read ENSDDTEGDNDS and EISDASDSDYY.

It is found in the nucleus. This chain is B3 domain-containing protein At3g06220, found in Arabidopsis thaliana (Mouse-ear cress).